The following is a 352-amino-acid chain: 4-hydroxy-2-oxovalerate aldolase (352 aa).

In terms of domain architecture, Pyruvate carboxyltransferase spans 13-265 (VRLTDTSLRD…KTGIDFFDIA (253 aa)). Substrate is bound at residue 21-22 (RD). A Mn(2+)-binding site is contributed by D22. H25 (proton acceptor) is an active-site residue. 2 residues coordinate substrate: S175 and H204. 2 residues coordinate Mn(2+): H204 and H206. A substrate-binding site is contributed by Y295.

It belongs to the 4-hydroxy-2-oxovalerate aldolase family.

It carries out the reaction (S)-4-hydroxy-2-oxopentanoate = acetaldehyde + pyruvate. This Mycobacterium avium (strain 104) protein is 4-hydroxy-2-oxovalerate aldolase.